Consider the following 474-residue polypeptide: L-arabinose isomerase (474 aa).

Mn(2+) is bound by residues Glu-306, Glu-331, His-348, and His-447.

Belongs to the arabinose isomerase family. Requires Mn(2+) as cofactor.

It carries out the reaction beta-L-arabinopyranose = L-ribulose. The protein operates within carbohydrate degradation; L-arabinose degradation via L-ribulose; D-xylulose 5-phosphate from L-arabinose (bacterial route): step 1/3. Its function is as follows. Catalyzes the conversion of L-arabinose to L-ribulose. The polypeptide is L-arabinose isomerase (Oceanobacillus iheyensis (strain DSM 14371 / CIP 107618 / JCM 11309 / KCTC 3954 / HTE831)).